Here is a 510-residue protein sequence, read N- to C-terminus: DNA nucleotidylexotransferase (510 aa).

The disordered stretch occupies residues 1–22 (MDPLQAVHLGPRKKRPRQLGTP). Residues 11–17 (PRKKRPR) carry the Nuclear localization signal motif. Residues 27–124 (PYDIRFRDLV…KPVEMMGRHQ (98 aa)) form the BRCT domain. Serine 134 bears the Phosphoserine mark. Residues 151–510 (SQYACQRRTT…DYIEPWERNA (360 aa)) are mediates interaction with DNTTIP2. The involved in DNA binding stretch occupies residues 258–262 (VGLKT). Residues 333–338 (GFRRGK) and 342–345 (HDVD) contribute to the a 2'-deoxyribonucleoside 5'-triphosphate site. Mg(2+)-binding residues include aspartate 343, aspartate 345, and aspartate 434. 449–450 (GW) is an a 2'-deoxyribonucleoside 5'-triphosphate binding site.

The protein belongs to the DNA polymerase type-X family. Interacts with PRP19 and DNTTIP1. Forms a ternary complex with DNTTIP2 and core histone. Released from this complex by PCNA. Interacts with TRERF1. Requires Mg(2+) as cofactor. Isoform TDT-L: Expressed in the thymus, and, at lower levels, in the bone marrow. Detected in both cycling and noncycling pro-B and pre-B cells (at protein level). Isoform TDT-S: Expressed in both cycling and noncycling pro-B, but not pre-B, cells (at protein level). Not detected in mature peripheral or germinal center B cells.

The protein localises to the nucleus. The protein resides in the cytoplasm. It catalyses the reaction DNA(n) + a 2'-deoxyribonucleoside 5'-triphosphate = DNA(n+1) + diphosphate. Its function is as follows. Transferase that catalyzes the nontemplated addition of nucleoside triphosphate to coding ends during V(D)J recombination (N addition). Involved in the generation of diversity in the antigen-binding region of immunoglobulin heavy and light chains and T-cell receptors during B- and T-cell development. Does not act on double-stranded DNA with blunt ends. In terms of biological role, 3'-to-5' DNA exonuclease. Involved in the generation of diversity in the antigen-binding region of immunoglobulin heavy and light chains and T-cell receptors during B- and T-cell development. Acts on single-stranded and double-stranded DNA with 3' or 5' extensions, but not on double-stranded DNA with blunt ends. Attenuates not only isoform TDT-S-catalyzed N addition, but also P (palindromic) addition in coding joins. Lacks terminal transferase activity. The chain is DNA nucleotidylexotransferase (Dntt) from Mus musculus (Mouse).